Reading from the N-terminus, the 303-residue chain is uncharacterized protein (303 aa).

It is found in the cytoplasm. This is an uncharacterized protein from Saccharomyces cerevisiae (strain ATCC 204508 / S288c) (Baker's yeast).